A 1021-amino-acid polypeptide reads, in one-letter code: Probable LRR receptor-like serine/threonine-protein kinase RFK1 (1021 aa).

The first 39 residues, 1-39 (MISLYQILAEKKKKKKNDLNIFAFSVFAIICFKFYSVNA), serve as a signal peptide directing secretion. The Extracellular portion of the chain corresponds to 41 to 625 (KLPQQEVDAL…PKTGMSPGAY (585 aa)). N96 is a glycosylation site (N-linked (GlcNAc...) asparagine). LRR repeat units follow at residues 99–122 (DCHV…IVKL) and 123–146 (PYLR…WASS). 3 N-linked (GlcNAc...) asparagine glycosylation sites follow: N136, N147, and N168. LRR repeat units follow at residues 148–168 (LTFI…EFGN), 169–192 (SSLT…LGNL), 193–216 (VHLK…LARL), 218–240 (NMTD…IQNW), and 241–266 (KQLE…VLSN). N218 carries N-linked (GlcNAc...) asparagine glycosylation. Residues N287 and N300 are each glycosylated (N-linked (GlcNAc...) asparagine). 4 LRR repeats span residues 288 to 312 (VTGL…LSHL), 313 to 336 (KELE…AQAE), 338 to 359 (LRFI…LLRD), and 361 to 381 (ITVD…RACR). N-linked (GlcNAc...) asparagine glycosylation is found at N486 and N512. The chain crosses the membrane as a helical span at residues 626–646 (IAIGIGAPCLIIFILGFLWIC). Over 647–1021 (GCLPRCGRQR…QERKKEESRP (375 aa)) the chain is Cytoplasmic. Phosphothreonine is present on T670. The Protein kinase domain maps to 681–956 (FNPTNKIGEG…EVVAMLEGLY (276 aa)). ATP contacts are provided by residues 687–695 (IGEGGFGAV) and K709. At Y754 the chain carries Phosphotyrosine. D807 serves as the catalytic Proton acceptor. S840 is modified (phosphoserine). Phosphothreonine occurs at positions 841 and 846. Y854 carries the phosphotyrosine modification. The tract at residues 985–1021 (ENNSKTQCSVKSYPSSSSTSSGAGQAVQERKKEESRP) is disordered. The segment covering 993 to 1005 (SVKSYPSSSSTSS) has biased composition (low complexity). Residues 1012–1021 (QERKKEESRP) are compositionally biased toward basic and acidic residues.

The protein belongs to the protein kinase superfamily. Ser/Thr protein kinase family. In terms of tissue distribution, mostly expressed in flower buds, especially in stamens.

The protein resides in the membrane. The enzyme catalyses L-seryl-[protein] + ATP = O-phospho-L-seryl-[protein] + ADP + H(+). It carries out the reaction L-threonyl-[protein] + ATP = O-phospho-L-threonyl-[protein] + ADP + H(+). The sequence is that of Probable LRR receptor-like serine/threonine-protein kinase RFK1 (RKF1) from Arabidopsis thaliana (Mouse-ear cress).